A 581-amino-acid chain; its full sequence is ATP-dependent lipid A-core flippase (581 aa).

A run of 6 helical transmembrane segments spans residues 21-41 (TVAIVAIIGMIGYSGMDALFI), 65-85 (FVVIALVIGRGVFNFMSSYCL), 138-158 (ALLIVVREGAFVVFLLAVMFY), 161-181 (WQLSLIFLVIIPLVAVIVTVV), 246-266 (LSVSIIQVLAASAMAVILWVV), and 271-291 (MIDTISSGDFVVLISSMMMLL). An ABC transmembrane type-1 domain is found at 24–306 (IVAIIGMIGY…LANVNSDMQR (283 aa)). The ABC transporter domain maps to 338–575 (IEVKNVTFKY…NGTYSALCKM (238 aa)). Residue 372 to 379 (GRSGSGKS) coordinates ATP.

It belongs to the ABC transporter superfamily. Lipid exporter (TC 3.A.1.106) family. In terms of assembly, homodimer.

The protein localises to the cell inner membrane. The catalysed reaction is ATP + H2O + lipid A-core oligosaccharideSide 1 = ADP + phosphate + lipid A-core oligosaccharideSide 2.. Its function is as follows. Involved in lipopolysaccharide (LPS) biosynthesis. Translocates lipid A-core from the inner to the outer leaflet of the inner membrane. Transmembrane domains (TMD) form a pore in the inner membrane and the ATP-binding domain (NBD) is responsible for energy generation. In Pseudoalteromonas translucida (strain TAC 125), this protein is ATP-dependent lipid A-core flippase.